A 272-amino-acid polypeptide reads, in one-letter code: Phosphoglycolate phosphatase (272 aa).

Catalysis depends on D19, which acts as the Nucleophile. Residues D19, D21, and D182 each coordinate Mg(2+).

It belongs to the HAD-like hydrolase superfamily. CbbY/CbbZ/Gph/YieH family. It depends on Mg(2+) as a cofactor.

It carries out the reaction 2-phosphoglycolate + H2O = glycolate + phosphate. Its pathway is organic acid metabolism; glycolate biosynthesis; glycolate from 2-phosphoglycolate: step 1/1. In terms of biological role, specifically catalyzes the dephosphorylation of 2-phosphoglycolate. Is involved in the dissimilation of the intracellular 2-phosphoglycolate formed during the DNA repair of 3'-phosphoglycolate ends, a major class of DNA lesions induced by oxidative stress. The polypeptide is Phosphoglycolate phosphatase (Pseudomonas fluorescens (strain Pf0-1)).